The following is a 192-amino-acid chain: Protein Syd (192 aa).

Belongs to the Syd family.

The protein localises to the cell inner membrane. Functionally, interacts with the SecY protein in vivo. May bind preferentially to an uncomplexed state of SecY, thus functioning either as a chelating agent for excess SecY in the cell or as a regulatory factor that negatively controls the translocase function. This chain is Protein Syd, found in Hahella chejuensis (strain KCTC 2396).